The chain runs to 275 residues: 4-hydroxy-3-methylbut-2-enyl diphosphate reductase (275 aa).

C12 provides a ligand contact to [4Fe-4S] cluster. Residues H40 and H70 each contribute to the (2E)-4-hydroxy-3-methylbut-2-enyl diphosphate site. H40 and H70 together coordinate dimethylallyl diphosphate. H40 and H70 together coordinate isopentenyl diphosphate. C92 contacts [4Fe-4S] cluster. H119 is a (2E)-4-hydroxy-3-methylbut-2-enyl diphosphate binding site. H119 serves as a coordination point for dimethylallyl diphosphate. H119 contributes to the isopentenyl diphosphate binding site. The Proton donor role is filled by E121. T151 contacts (2E)-4-hydroxy-3-methylbut-2-enyl diphosphate. C181 is a [4Fe-4S] cluster binding site. The (2E)-4-hydroxy-3-methylbut-2-enyl diphosphate site is built by S209, S210, N211, and S251. Positions 209, 210, 211, and 251 each coordinate dimethylallyl diphosphate. S209, S210, N211, and S251 together coordinate isopentenyl diphosphate.

Belongs to the IspH family. The cofactor is [4Fe-4S] cluster.

The catalysed reaction is isopentenyl diphosphate + 2 oxidized [2Fe-2S]-[ferredoxin] + H2O = (2E)-4-hydroxy-3-methylbut-2-enyl diphosphate + 2 reduced [2Fe-2S]-[ferredoxin] + 2 H(+). The enzyme catalyses dimethylallyl diphosphate + 2 oxidized [2Fe-2S]-[ferredoxin] + H2O = (2E)-4-hydroxy-3-methylbut-2-enyl diphosphate + 2 reduced [2Fe-2S]-[ferredoxin] + 2 H(+). The protein operates within isoprenoid biosynthesis; dimethylallyl diphosphate biosynthesis; dimethylallyl diphosphate from (2E)-4-hydroxy-3-methylbutenyl diphosphate: step 1/1. Its pathway is isoprenoid biosynthesis; isopentenyl diphosphate biosynthesis via DXP pathway; isopentenyl diphosphate from 1-deoxy-D-xylulose 5-phosphate: step 6/6. Its function is as follows. Catalyzes the conversion of 1-hydroxy-2-methyl-2-(E)-butenyl 4-diphosphate (HMBPP) into a mixture of isopentenyl diphosphate (IPP) and dimethylallyl diphosphate (DMAPP). Acts in the terminal step of the DOXP/MEP pathway for isoprenoid precursor biosynthesis. The polypeptide is 4-hydroxy-3-methylbut-2-enyl diphosphate reductase (Thermotoga maritima (strain ATCC 43589 / DSM 3109 / JCM 10099 / NBRC 100826 / MSB8)).